Here is a 729-residue protein sequence, read N- to C-terminus: Fatty acid oxidation complex subunit alpha (729 aa).

Residues 1–189 (MLYQSETLQL…KIGLVDAVVD (189 aa)) are enoyl-CoA hydratase/isomerase. Asp296 contacts substrate. Residues 311 to 729 (AAPKLAAVLG…LLDVSTNQPA (419 aa)) are 3-hydroxyacyl-CoA dehydrogenase. NAD(+) contacts are provided by residues Met324, Asp343, 400–402 (VVE), Lys407, and Ser429. His450 acts as the For 3-hydroxyacyl-CoA dehydrogenase activity in catalysis. Position 453 (Asn453) interacts with NAD(+). Positions 500 and 660 each coordinate substrate.

This sequence in the N-terminal section; belongs to the enoyl-CoA hydratase/isomerase family. The protein in the C-terminal section; belongs to the 3-hydroxyacyl-CoA dehydrogenase family. In terms of assembly, heterotetramer of two alpha chains (FadB) and two beta chains (FadA).

The catalysed reaction is a (3S)-3-hydroxyacyl-CoA + NAD(+) = a 3-oxoacyl-CoA + NADH + H(+). The enzyme catalyses a (3S)-3-hydroxyacyl-CoA = a (2E)-enoyl-CoA + H2O. It catalyses the reaction a 4-saturated-(3S)-3-hydroxyacyl-CoA = a (3E)-enoyl-CoA + H2O. It carries out the reaction (3S)-3-hydroxybutanoyl-CoA = (3R)-3-hydroxybutanoyl-CoA. The catalysed reaction is a (3Z)-enoyl-CoA = a 4-saturated (2E)-enoyl-CoA. The enzyme catalyses a (3E)-enoyl-CoA = a 4-saturated (2E)-enoyl-CoA. The protein operates within lipid metabolism; fatty acid beta-oxidation. In terms of biological role, involved in the aerobic and anaerobic degradation of long-chain fatty acids via beta-oxidation cycle. Catalyzes the formation of 3-oxoacyl-CoA from enoyl-CoA via L-3-hydroxyacyl-CoA. It can also use D-3-hydroxyacyl-CoA and cis-3-enoyl-CoA as substrate. The polypeptide is Fatty acid oxidation complex subunit alpha (Yersinia pseudotuberculosis serotype O:1b (strain IP 31758)).